The chain runs to 727 residues: Glucans biosynthesis glucosyltransferase H (727 aa).

Residues 17–41 (GSAMPNERPGPMEPQSLSQMPEGFP) are disordered. 6 consecutive transmembrane segments (helical) span residues 58-80 (FFVV…AVFS), 95-117 (FAIN…LLLL), 407-429 (GIMA…MLAL), 457-479 (ALRL…VLLL), 499-521 (VLFE…CGAV), and 572-594 (LLAW…AWTG).

The protein belongs to the glycosyltransferase 2 family. OpgH subfamily.

It is found in the cell inner membrane. It functions in the pathway glycan metabolism; osmoregulated periplasmic glucan (OPG) biosynthesis. In terms of biological role, involved in the biosynthesis of osmoregulated periplasmic glucans (OPGs). This Shewanella oneidensis (strain ATCC 700550 / JCM 31522 / CIP 106686 / LMG 19005 / NCIMB 14063 / MR-1) protein is Glucans biosynthesis glucosyltransferase H.